A 155-amino-acid polypeptide reads, in one-letter code: 6,7-dimethyl-8-ribityllumazine synthase (155 aa).

Residues Trp-23, 57-59 (AWE), and 81-83 (CVI) contribute to the 5-amino-6-(D-ribitylamino)uracil site. 86 to 87 (DT) is a binding site for (2S)-2-hydroxy-3-oxobutyl phosphate. The active-site Proton donor is His-89. Asn-114 contributes to the 5-amino-6-(D-ribitylamino)uracil binding site. Arg-128 lines the (2S)-2-hydroxy-3-oxobutyl phosphate pocket.

It belongs to the DMRL synthase family. In terms of assembly, forms an icosahedral capsid composed of 60 subunits, arranged as a dodecamer of pentamers.

The catalysed reaction is (2S)-2-hydroxy-3-oxobutyl phosphate + 5-amino-6-(D-ribitylamino)uracil = 6,7-dimethyl-8-(1-D-ribityl)lumazine + phosphate + 2 H2O + H(+). It participates in cofactor biosynthesis; riboflavin biosynthesis; riboflavin from 2-hydroxy-3-oxobutyl phosphate and 5-amino-6-(D-ribitylamino)uracil: step 1/2. Its function is as follows. Catalyzes the formation of 6,7-dimethyl-8-ribityllumazine by condensation of 5-amino-6-(D-ribitylamino)uracil with 3,4-dihydroxy-2-butanone 4-phosphate. This is the penultimate step in the biosynthesis of riboflavin. The chain is 6,7-dimethyl-8-ribityllumazine synthase from Stenotrophomonas maltophilia (strain K279a).